Here is a 295-residue protein sequence, read N- to C-terminus: Pyridoxal 5'-phosphate synthase subunit PdxS (295 aa).

D25 contacts D-ribose 5-phosphate. K82 acts as the Schiff-base intermediate with D-ribose 5-phosphate in catalysis. G154 serves as a coordination point for D-ribose 5-phosphate. A D-glyceraldehyde 3-phosphate-binding site is contributed by R166. D-ribose 5-phosphate contacts are provided by residues G215 and 236-237; that span reads GS.

The protein belongs to the PdxS/SNZ family. As to quaternary structure, in the presence of PdxT, forms a dodecamer of heterodimers.

It carries out the reaction aldehydo-D-ribose 5-phosphate + D-glyceraldehyde 3-phosphate + L-glutamine = pyridoxal 5'-phosphate + L-glutamate + phosphate + 3 H2O + H(+). It participates in cofactor biosynthesis; pyridoxal 5'-phosphate biosynthesis. Catalyzes the formation of pyridoxal 5'-phosphate from ribose 5-phosphate (RBP), glyceraldehyde 3-phosphate (G3P) and ammonia. The ammonia is provided by the PdxT subunit. Can also use ribulose 5-phosphate and dihydroxyacetone phosphate as substrates, resulting from enzyme-catalyzed isomerization of RBP and G3P, respectively. This chain is Pyridoxal 5'-phosphate synthase subunit PdxS, found in Bacillus cereus (strain Q1).